The sequence spans 728 residues: Catalase B (728 aa).

Active-site residues include H107 and N180. Y394 is a heme binding site.

Belongs to the catalase family. Requires heme as cofactor.

The protein resides in the secreted. The enzyme catalyses 2 H2O2 = O2 + 2 H2O. Functionally, occurs in almost all aerobically respiring organisms and serves to protect cells from the toxic effects of hydrogen peroxide. The chain is Catalase B (CATB) from Ajellomyces capsulatus (Darling's disease fungus).